Consider the following 254-residue polypeptide: MVVWALVMPSVPTKGLAETIRSGIDRVEPKEEPPKVPQAPKRDLKPGEIIEERTENTKVYYNGDGTFTKKIYFEPIHVKKKGQKIFEEVSSSLTDSTNNTNYVETENTILETNFYKKMVDGEYANFHYNGYSISYSILEAAGNDVQSIKAKDVAAVYKKKDNKILHKNIFPSIDLQNITFNESTKEDLVLHSVGYHIFKFRLKTDLQADIQDDGSILLTNQEHEKVFELPKPFMVDSNVDEHSGEVQRLRECNV.

A disordered region spans residues aspartate 25 to proline 46.

It is found in the secreted. It localises to the cell wall. The sequence is that of Wall-associated protein (wapA') from Geobacillus stearothermophilus (Bacillus stearothermophilus).